Reading from the N-terminus, the 121-residue chain is MINYSPKRSDEPIWWGLFGAGGVWFAMITPVTVLLMGILLPLHGFGVVDIGYDKVYAFVSHPIGGAFTVLSLSLPMWHAMHRVHHGLHDLQIHLGTVGKYACYLAAALVTVLATVWVIQLS.

A run of 3 helical transmembrane segments spans residues 22–42 (GVWFAMITPVTVLLMGILLPL), 57–77 (AFVSHPIGGAFTVLSLSLPMW), and 100–120 (YACYLAAALVTVLATVWVIQL).

The protein belongs to the FrdD family. Part of an enzyme complex containing four subunits: a flavoprotein (FrdA), an iron-sulfur protein (FrdB), and two hydrophobic anchor proteins (FrdC and FrdD).

It localises to the cell inner membrane. Functionally, anchors the catalytic components of the fumarate reductase complex to the cell membrane, binds quinones. This is Fumarate reductase subunit D from Shewanella putrefaciens (strain CN-32 / ATCC BAA-453).